The primary structure comprises 95 residues: Integration host factor subunit beta (95 aa).

The protein belongs to the bacterial histone-like protein family. In terms of assembly, heterodimer of an alpha and a beta chain.

In terms of biological role, this protein is one of the two subunits of integration host factor, a specific DNA-binding protein that functions in genetic recombination as well as in transcriptional and translational control. The chain is Integration host factor subunit beta from Shewanella amazonensis (strain ATCC BAA-1098 / SB2B).